We begin with the raw amino-acid sequence, 584 residues long: DNA mismatch repair protein MutL (584 aa).

This sequence belongs to the DNA mismatch repair MutL/HexB family.

In terms of biological role, this protein is involved in the repair of mismatches in DNA. It is required for dam-dependent methyl-directed DNA mismatch repair. May act as a 'molecular matchmaker', a protein that promotes the formation of a stable complex between two or more DNA-binding proteins in an ATP-dependent manner without itself being part of a final effector complex. The polypeptide is DNA mismatch repair protein MutL (Syntrophomonas wolfei subsp. wolfei (strain DSM 2245B / Goettingen)).